Consider the following 260-residue polypeptide: COP9 signalosome complex subunit 7 (260 aa).

A PCI domain is found at 1–159 (MDIEQKQAEI…RCFEVPFAAG (159 aa)). Positions 228–260 (IRGNKEMFGEPSGVMDYEEDGIRPKRRRHPVTR) are disordered. Positions 251-260 (PKRRRHPVTR) are enriched in basic residues.

The protein belongs to the CSN7/EIF3M family. CSN7 subfamily. In terms of assembly, component of the CSN complex, probably composed of CSN1, CSN2, CSN3, CSN4, CSN5 (CSN5A or CSN5B), CSN6 (CSN6A or CSN6B), CSN7 and CSN8. In the CSN complex, it probably interacts directly with CSN4. Interacts (via PCI domain) with CSN1 (via PCI domain) and CSN8 (via PCI domain), and (via C-terminal tail) with CSN6A, TSO2 and RNR2A. Cannot interact simultaneously with CSN1 and CSN8 to form ternary complexes. Also exists as a monomeric form. Binds to the translation initiation factors TIF3E1 and TIF3H1. Phosphorylated.

It localises to the cytoplasm. The protein resides in the nucleus. In terms of biological role, component of the COP9 signalosome complex (CSN), a complex involved in various cellular and developmental processes such as photomorphogenesis and auxin and jasmonate responses. The CSN complex is an essential regulator of the ubiquitin (Ubl) conjugation pathway by mediating the deneddylation of the cullin subunits of SCF-type E3 ligase complexes, leading to decrease the Ubl ligase activity of SCF. It is involved in repression of photomorphogenesis in darkness by regulating the activity of COP1-containing Ubl ligase complexes. The complex is also required for degradation of IAA6 by regulating the activity of the Ubl ligase SCF-TIR complex. Regulates the TSO2 subcellular localization. May be involved in nucleic acid binding. The sequence is that of COP9 signalosome complex subunit 7 (CSN7) from Arabidopsis thaliana (Mouse-ear cress).